The primary structure comprises 418 residues: F-box/LRR-repeat protein 14 (418 aa).

The 47-residue stretch at 2-48 (ETHISCLFPELLAMIFGYLDVRDKGRAAQVCTAWRDAAYHKSVWRGV) folds into the F-box domain. The tract at residues 2-48 (ETHISCLFPELLAMIFGYLDVRDKGRAAQVCTAWRDAAYHKSVWRGV) is required for down-regulation of SNAI1. LRR repeat units lie at residues 144 to 163 (GLEV…GLLL), 170 to 191 (RLKS…GHLA), 203 to 225 (GLEQ…HISR), 229 to 250 (GLRL…LHLS), and 254 to 275 (SLRS…MHLA).

In terms of assembly, part of a SCF (SKP1-cullin-F-box) ubiquitin-protein ligase complex. Interacts with SKP1 and CUL1. Interacts with SNAI1; the interaction requires the phosphorylation of the two serine residues in the substrate destruction motif D-S-G-X(2,3,4)-S.

It is found in the cytoplasm. Functionally, substrate-recognition component of some SCF (SKP1-CUL1-F-box protein)-type E3 ubiquitin-protein ligase complexes. The SCF(FBXL14) complex acts by mediating ubiquitination and subsequent degradation of SNAI1. This chain is F-box/LRR-repeat protein 14 (FBXL14), found in Homo sapiens (Human).